The following is a 611-amino-acid chain: MPKLRSATSTQGRNMAGARALWRATGMKENDFGKPIIAVVNSFTQFVPGHVHLKDMGQLVAAEIEKFGGVAKEFNTIAVDDGIAMGHGGMLYSLPSRDLIADSVEYMVNAHCADAMVCISNCDKITPGMLMAALRLNIPTVFVSGGPMEAGKTKLSDQIIKLDLVDAMIQGANPNVSDDVSEQIERSACPTCGSCSGMFTANSMNCLTEALGLSLPGNGSCLATHADRKQLFLAAGKQIVELCKRYYEQDDTSVLPRSIATKEAFDNAMSLDIAMGGSTNTVLHLLAAAQEAEVNFTMADIDRLSRVVPCLSKVAPNTQKYHMEDVHRAGGIMAILGELDRAGLLNSQTRTILGMSIGEQIAKYDIKLTQDKAIHKFFRAGPAGIRTTQAFSQDCRWDTVDDDRENGCIRSKEFAYSQDGGLAMLSGNIALDGCIVKTAGVDESILKFSGKAIVFESQEDAVSGILGGKVQAGHVVVIRYEGPKGGPGMQEMLYPTSYLKSMGLGKACALLTDGRFSGGTSGLSIGHCSPEAAAGGLIGVVKDGDIIEIDIPNRRIELMVSEEELAERRAEQDKLGWKPANRQREVSFALKVYGYFATSADKGAVRDKTKI.

Mg(2+) is bound at residue D81. Residue C122 participates in [2Fe-2S] cluster binding. Residues D123 and K124 each contribute to the Mg(2+) site. The residue at position 124 (K124) is an N6-carboxylysine. C195 contributes to the [2Fe-2S] cluster binding site. E491 contacts Mg(2+). Residue S517 is the Proton acceptor of the active site.

The protein belongs to the IlvD/Edd family. In terms of assembly, homodimer. [2Fe-2S] cluster is required as a cofactor. The cofactor is Mg(2+).

It catalyses the reaction (2R)-2,3-dihydroxy-3-methylbutanoate = 3-methyl-2-oxobutanoate + H2O. It carries out the reaction (2R,3R)-2,3-dihydroxy-3-methylpentanoate = (S)-3-methyl-2-oxopentanoate + H2O. Its pathway is amino-acid biosynthesis; L-isoleucine biosynthesis; L-isoleucine from 2-oxobutanoate: step 3/4. It functions in the pathway amino-acid biosynthesis; L-valine biosynthesis; L-valine from pyruvate: step 3/4. Its function is as follows. Functions in the biosynthesis of branched-chain amino acids. Catalyzes the dehydration of (2R,3R)-2,3-dihydroxy-3-methylpentanoate (2,3-dihydroxy-3-methylvalerate) into 2-oxo-3-methylpentanoate (2-oxo-3-methylvalerate) and of (2R)-2,3-dihydroxy-3-methylbutanoate (2,3-dihydroxyisovalerate) into 2-oxo-3-methylbutanoate (2-oxoisovalerate), the penultimate precursor to L-isoleucine and L-valine, respectively. The polypeptide is Dihydroxy-acid dehydratase (Histophilus somni (strain 2336) (Haemophilus somnus)).